We begin with the raw amino-acid sequence, 396 residues long: Elongation factor Tu 2 (396 aa).

The tr-type G domain maps to 10 to 206 (KPHVNVGTIG…ALDTYIPTPE (197 aa)). Residues 19–26 (GHVDHGKT) are G1. 19–26 (GHVDHGKT) is a GTP binding site. Thr26 provides a ligand contact to Mg(2+). The tract at residues 60–64 (GITIN) is G2. Positions 81–84 (DCPG) are G3. GTP is bound by residues 81-85 (DCPGH) and 136-139 (NKCD). A G4 region spans residues 136 to 139 (NKCD). Residues 174–176 (SAK) form a G5 region.

It belongs to the TRAFAC class translation factor GTPase superfamily. Classic translation factor GTPase family. EF-Tu/EF-1A subfamily. Monomer.

The protein resides in the cytoplasm. It carries out the reaction GTP + H2O = GDP + phosphate + H(+). Functionally, GTP hydrolase that promotes the GTP-dependent binding of aminoacyl-tRNA to the A-site of ribosomes during protein biosynthesis. In Acidovorax sp. (strain JS42), this protein is Elongation factor Tu 2.